We begin with the raw amino-acid sequence, 344 residues long: Putative glycosyltransferase EpsH (344 aa).

The protein belongs to the glycosyltransferase 2 family.

Its function is as follows. May be involved in the production of the exopolysaccharide (EPS) component of the extracellular matrix during biofilm formation. EPS is responsible for the adhesion of chains of cells into bundles. Required for biofilm maintenance. The chain is Putative glycosyltransferase EpsH (epsH) from Bacillus subtilis (strain 168).